The sequence spans 226 residues: Exopolysaccharide production protein ExoY (226 aa).

A helical membrane pass occupies residues 34 to 54 (VLAASVALLLFSPLFLLIMAL).

This sequence belongs to the bacterial sugar transferase family.

It localises to the cell membrane. It participates in glycan metabolism; exopolysaccharide biosynthesis. Needed for the addition of the first sugar (galactose) to the isoprenoid carrier. May function as a sugar transferase. In Rhizobium meliloti (strain 1021) (Ensifer meliloti), this protein is Exopolysaccharide production protein ExoY (exoY).